The sequence spans 414 residues: Esterase FrsA (414 aa).

It belongs to the FrsA family.

The catalysed reaction is a carboxylic ester + H2O = an alcohol + a carboxylate + H(+). Catalyzes the hydrolysis of esters. The chain is Esterase FrsA from Escherichia coli O8 (strain IAI1).